The following is a 278-amino-acid chain: tRNA pseudouridine synthase A (278 aa).

Catalysis depends on Asp51, which acts as the Nucleophile. Substrate is bound at residue Tyr109.

The protein belongs to the tRNA pseudouridine synthase TruA family. As to quaternary structure, homodimer.

It catalyses the reaction uridine(38/39/40) in tRNA = pseudouridine(38/39/40) in tRNA. In terms of biological role, formation of pseudouridine at positions 38, 39 and 40 in the anticodon stem and loop of transfer RNAs. This Paracidovorax citrulli (strain AAC00-1) (Acidovorax citrulli) protein is tRNA pseudouridine synthase A.